Here is a 296-residue protein sequence, read N- to C-terminus: Nucleotide-binding protein Pnec_1620 (296 aa).

Glycine 8–serine 15 is a binding site for ATP. Residue aspartate 57–arginine 60 coordinates GTP.

Belongs to the RapZ-like family.

In terms of biological role, displays ATPase and GTPase activities. The chain is Nucleotide-binding protein Pnec_1620 from Polynucleobacter necessarius subsp. necessarius (strain STIR1).